A 300-amino-acid polypeptide reads, in one-letter code: 4-hydroxy-tetrahydrodipicolinate synthase (300 aa).

T46 contributes to the pyruvate binding site. The Proton donor/acceptor role is filled by Y134. The active-site Schiff-base intermediate with substrate is K162. I207 lines the pyruvate pocket.

This sequence belongs to the DapA family. Homotetramer; dimer of dimers.

The protein resides in the cytoplasm. The catalysed reaction is L-aspartate 4-semialdehyde + pyruvate = (2S,4S)-4-hydroxy-2,3,4,5-tetrahydrodipicolinate + H2O + H(+). It participates in amino-acid biosynthesis; L-lysine biosynthesis via DAP pathway; (S)-tetrahydrodipicolinate from L-aspartate: step 3/4. Catalyzes the condensation of (S)-aspartate-beta-semialdehyde [(S)-ASA] and pyruvate to 4-hydroxy-tetrahydrodipicolinate (HTPA). The protein is 4-hydroxy-tetrahydrodipicolinate synthase of Protochlamydia amoebophila (strain UWE25).